The following is a 557-amino-acid chain: Nucleoporin AMO1 (557 aa).

Residues 1–25 form a C3H1-type zinc finger; sequence MTVCRFWQQGYCRNGNACKFEHPPK. Positions 114-141 form a coiled coil; that stretch reads QGALNEIQAAYQAAQQQIQNTLQNIPAA. The disordered stretch occupies residues 161–297; the sequence is ESSKGSSTGG…SALGPKPGAF (137 aa). 10 SXFG repeats span residues 171-174, 200-203, 213-216, 228-231, 240-243, 249-252, 262-265, 282-285, 303-306, and 314-317; these read SVFG, SAFG, STFG, and SPFG. Polar residues predominate over residues 195 to 215; the sequence is STPSTSAFGQPSPLGQKSSAF. The segment covering 243–253 has biased composition (polar residues); it reads GSPQTGSTFGQ. A disordered region spans residues 315–463; the sequence is PFGAAAQATQ…DLLSYATKNP (149 aa). 2 stretches are compositionally biased toward polar residues: residues 321 to 338 and 351 to 366; these read QATQ…QAAN and GQPS…GQPS. SXFG repeat units lie at residues 348–351, 370–373, 387–390, and 407–410; these read SAFG and SLFG. Residues 367 to 385 show a composition bias toward low complexity; that stretch reads TQSSAFGQQQPQQAGTFGS. Polar residues predominate over residues 388–429; sequence LFGQQQQQPSNVFGQPSTTSAFGSQAATSGFSQLGNATSTIG. Positions 430–443 are enriched in low complexity; that stretch reads ASPAGAQAPASKSP.

In terms of assembly, the nuclear pore complex (NPC) constitutes the exclusive means of nucleocytoplasmic transport. NPCs allow the passive diffusion of ions and small molecules and the active, nuclear transport receptor-mediated bidirectional transport of macromolecules such as proteins, RNAs, ribonucleoparticles (RNPs), and ribosomal subunits across the nuclear envelope. The 55-60 MDa NPC is composed of at least 28 different subunits: AMO1, ELYS, GLE1, GLE2, MLP1, NDC1, NIC96, NSP1, NUP133, NUP145, NUP152, NUP159, NUP170, NUP188, NUP192, NUP37, NUP49, NUP53, NUP56, NUP57, NUP82, NUP84, NUP85, POM152, POM33, POM34, SEC13 and SEH1. Due to its 8-fold rotational symmetry, all subunits are present with 8 copies or multiples thereof.

The protein resides in the nucleus. The protein localises to the nuclear pore complex. It localises to the nucleus membrane. In terms of biological role, functions as a component of the nuclear pore complex (NPC). NPC components, collectively referred to as nucleoporins (NUPs), can play the role of both NPC structural components and of docking or interaction partners for transiently associated nuclear transport factors. Active directional transport is assured by both, a Phe-Gly (FG) repeat affinity gradient for these transport factors across the NPC and a transport cofactor concentration gradient across the nuclear envelope (GSP1 and GSP2 GTPases associated predominantly with GTP in the nucleus, with GDP in the cytoplasm). AMO1 is specifically important for nuclear protein and mRNA export. This chain is Nucleoporin AMO1 (AMO1), found in Chaetomium thermophilum (strain DSM 1495 / CBS 144.50 / IMI 039719) (Thermochaetoides thermophila).